We begin with the raw amino-acid sequence, 86 residues long: U15-lycotoxin-Ls1d (86 aa).

Positions 1–20 are cleaved as a signal peptide; the sequence is MNSKIFAVLFLLAFLSCVLS. One can recognise a WAP domain in the interval 21–66; sequence DQYCPKSSITACKKMNIRNDCCKDDDCTGGSWCCATPCGNFCKYPT. Disulfide bonds link Cys-24/Cys-54, Cys-32/Cys-58, Cys-41/Cys-53, Cys-42/Cys-80, and Cys-47/Cys-62.

Belongs to the venom protein 11 family. 01 (wap-1) subfamily. Post-translationally, contains 5 disulfide bonds. In terms of tissue distribution, expressed by the venom gland.

The protein localises to the secreted. Has antibacterial activity. This Lycosa singoriensis (Wolf spider) protein is U15-lycotoxin-Ls1d.